Consider the following 104-residue polypeptide: Small ribosomal subunit protein bS18c (104 aa).

It belongs to the bacterial ribosomal protein bS18 family. In terms of assembly, part of the 30S ribosomal subunit.

Its subcellular location is the plastid. The protein localises to the chloroplast. This is Small ribosomal subunit protein bS18c from Lotus japonicus (Lotus corniculatus var. japonicus).